Consider the following 132-residue polypeptide: Small ribosomal subunit protein uS8c (132 aa).

Belongs to the universal ribosomal protein uS8 family. Part of the 30S ribosomal subunit.

The protein localises to the plastid. Its subcellular location is the chloroplast. One of the primary rRNA binding proteins, it binds directly to 16S rRNA central domain where it helps coordinate assembly of the platform of the 30S subunit. The polypeptide is Small ribosomal subunit protein uS8c (rps8) (Drimys granadensis).